The primary structure comprises 439 residues: MEVIMNSSIVKLPNKYELVKDTLVLILAGGRGSRLYELTDKRAKPALYFGGNRRIIDFALSNCLNSGLNRIGVVTQYAAHSLLRHLQNGWSFLPAERGEFIDMLPARQQIDDSTWYRGTADAVYQNMAIIRDHYCPKYILILAGDHIYKQDYSQMLLDHIHSGAKCTVGCIEVEREKATEFGVMAVNENLKVKSFVEKPKDPPAMVGKPNTSLASMGIYVFDADYLYDVLEREVSSPYTSHDFGKDILPKALEEGVLYAHPFSRSCMGRNTEGEIYWRDVGTLDSFWQSNIDLVCENPQLDIYDQSWPIRGNPVQTYPSKFFYKKENARPVDNSLISGGCVITDASISYSVLFDRIKINEGSQIDHCVVLPQVTIGKNCKLKRCIIDRHSVIPDGMEIGVDLELDRQRFRVSSGGVVLVTPSMLKKLNGEEVASEAHLD.

Alpha-D-glucose 1-phosphate contacts are provided by residues Tyr-116, Gly-182, 197 to 198 (EK), and Ser-215.

It belongs to the bacterial/plant glucose-1-phosphate adenylyltransferase family. Homotetramer.

The catalysed reaction is alpha-D-glucose 1-phosphate + ATP + H(+) = ADP-alpha-D-glucose + diphosphate. The protein operates within glycan biosynthesis; glycogen biosynthesis. Functionally, involved in the biosynthesis of ADP-glucose, a building block required for the elongation reactions to produce glycogen. Catalyzes the reaction between ATP and alpha-D-glucose 1-phosphate (G1P) to produce pyrophosphate and ADP-Glc. The polypeptide is Glucose-1-phosphate adenylyltransferase (Pasteurella multocida (strain Pm70)).